The sequence spans 481 residues: Glycogen synthase (481 aa).

Lysine 15 contacts ADP-alpha-D-glucose.

Belongs to the glycosyltransferase 1 family. Bacterial/plant glycogen synthase subfamily.

It catalyses the reaction [(1-&gt;4)-alpha-D-glucosyl](n) + ADP-alpha-D-glucose = [(1-&gt;4)-alpha-D-glucosyl](n+1) + ADP + H(+). Its pathway is glycan biosynthesis; glycogen biosynthesis. Its function is as follows. Synthesizes alpha-1,4-glucan chains using ADP-glucose. The polypeptide is Glycogen synthase (Thermosipho melanesiensis (strain DSM 12029 / CIP 104789 / BI429)).